A 256-amino-acid chain; its full sequence is 4-hydroxy-tetrahydrodipicolinate reductase (256 aa).

Residues 12-17 (GINGRV), aspartate 39, 86-88 (GTT), and 110-113 (AANY) contribute to the NAD(+) site. Histidine 144 (proton donor/acceptor) is an active-site residue. Position 145 (histidine 145) interacts with (S)-2,3,4,5-tetrahydrodipicolinate. Lysine 148 (proton donor) is an active-site residue. A (S)-2,3,4,5-tetrahydrodipicolinate-binding site is contributed by 154–155 (GT).

The protein belongs to the DapB family.

The protein resides in the cytoplasm. It catalyses the reaction (S)-2,3,4,5-tetrahydrodipicolinate + NAD(+) + H2O = (2S,4S)-4-hydroxy-2,3,4,5-tetrahydrodipicolinate + NADH + H(+). The catalysed reaction is (S)-2,3,4,5-tetrahydrodipicolinate + NADP(+) + H2O = (2S,4S)-4-hydroxy-2,3,4,5-tetrahydrodipicolinate + NADPH + H(+). Its pathway is amino-acid biosynthesis; L-lysine biosynthesis via DAP pathway; (S)-tetrahydrodipicolinate from L-aspartate: step 4/4. In terms of biological role, catalyzes the conversion of 4-hydroxy-tetrahydrodipicolinate (HTPA) to tetrahydrodipicolinate. The sequence is that of 4-hydroxy-tetrahydrodipicolinate reductase from Gluconacetobacter diazotrophicus (strain ATCC 49037 / DSM 5601 / CCUG 37298 / CIP 103539 / LMG 7603 / PAl5).